A 170-amino-acid chain; its full sequence is Adenine phosphoribosyltransferase (170 aa).

The protein belongs to the purine/pyrimidine phosphoribosyltransferase family. In terms of assembly, homodimer.

It localises to the cytoplasm. The enzyme catalyses AMP + diphosphate = 5-phospho-alpha-D-ribose 1-diphosphate + adenine. It participates in purine metabolism; AMP biosynthesis via salvage pathway; AMP from adenine: step 1/1. Its function is as follows. Catalyzes a salvage reaction resulting in the formation of AMP, that is energically less costly than de novo synthesis. The polypeptide is Adenine phosphoribosyltransferase (Thermotoga sp. (strain RQ2)).